A 147-amino-acid polypeptide reads, in one-letter code: Putative 2'-deoxynucleoside 5'-phosphate N-hydrolase 1 (147 aa).

Residues 10–16, tyrosine 25, histidine 42, glutamate 90, and 114–116 contribute to the substrate site; these read YFCGSIR and SAM.

The protein belongs to the 2'-deoxynucleoside 5'-phosphate N-hydrolase 1 family. Monomer and homodimer.

Its subcellular location is the cytoplasm. It localises to the nucleus. The catalysed reaction is a pyrimidine 2'-deoxyribonucleoside 5'-phosphate + H2O = a pyrimidine nucleobase + 2-deoxy-D-ribose 5-phosphate. It carries out the reaction a purine 2'-deoxyribonucleoside 5'-phosphate + H2O = a purine nucleobase + 2-deoxy-D-ribose 5-phosphate. Functionally, catalyzes the cleavage of the N-glycosidic bond of deoxyribonucleoside 5'-monophosphates to yield deoxyribose 5-phosphate and a purine or pyrimidine base. This chain is Putative 2'-deoxynucleoside 5'-phosphate N-hydrolase 1, found in Nematostella vectensis (Starlet sea anemone).